The sequence spans 222 residues: Cysteine protease inhibitor 9 (222 aa).

Positions 1–26 are cleaved as a signal peptide; it reads MKSINILSFLLLSSTLSLVAFARSFS. A propeptide spanning residues 27 to 42 is cleaved from the precursor; sequence SENPIVLPSTCHDDDN. The Vacuolar targeting signal signature appears at 29-34; the sequence is NPIVLP. 2 cysteine pairs are disulfide-bonded: Cys-84–Cys-136 and Cys-185–Cys-191.

Belongs to the protease inhibitor I3 (leguminous Kunitz-type inhibitor) family. Tuber.

It is found in the vacuole. Functionally, putative inhibitor of cysteine proteases. Does not inhibit papain. May protect the plant by inhibiting proteases of invading organisms. The sequence is that of Cysteine protease inhibitor 9 from Solanum tuberosum (Potato).